A 331-amino-acid chain; its full sequence is Germ cell-specific gene 1-like protein (331 aa).

Topologically, residues 1–8 (MKTSRRGR) are cytoplasmic. The chain crosses the membrane as a helical span at residues 9-29 (ALLAVALNLLALLFATTAFLT). The Extracellular segment spans residues 30 to 132 (THWCQGTQRV…FIDLAPASEK (103 aa)). The chain crosses the membrane as a helical span at residues 133 to 153 (GVLWLSVVSEVLYILLLVVGF). Over 154-173 (SLMCLELFHSSNVIDGLKLN) the chain is Cytoplasmic. Residues 174 to 194 (AFAAVFTVLSGLLGMVAHMMY) form a helical membrane-spanning segment. The Extracellular segment spans residues 195-217 (TQVFQVTVSLGPEDWRPHSWDYG). A helical transmembrane segment spans residues 218–238 (WSFCLAWGSFTCCMAASVTTL). Topologically, residues 239–331 (NSYTKTVIEF…RQCWVLGHWV (93 aa)) are cytoplasmic.

This sequence belongs to the GSG1 family. Component of the inner core of AMPAR complex. AMPAR complex consists of an inner core made of 4 pore-forming GluA/GRIA proteins (GRIA1, GRIA2, GRIA3 and GRIA4) and 4 major auxiliary subunits arranged in a twofold symmetry. One of the two pairs of distinct binding sites is occupied either by CNIH2, CNIH3 or CACNG2, CACNG3. The other harbors CACNG2, CACNG3, CACNG4, CACNG8 or GSG1L. This inner core of AMPAR complex is complemented by outer core constituents binding directly to the GluA/GRIA proteins at sites distinct from the interaction sites of the inner core constituents. Outer core constituents include at least PRRT1, PRRT2, CKAMP44/SHISA9, FRRS1L and NRN1. The proteins of the inner and outer core serve as a platform for other, more peripherally associated AMPAR constituents. Alone or in combination, these auxiliary subunits control the gating and pharmacology of the AMPAR complex and profoundly impact their biogenesis and protein processing.

It is found in the cell membrane. The protein resides in the synapse. Its function is as follows. As a component of the inner core of AMPAR complex, modifies AMPA receptor (AMPAR) gating. In Homo sapiens (Human), this protein is Germ cell-specific gene 1-like protein (GSG1L).